The following is a 73-amino-acid chain: Crustacean hyperglycemic hormone (73 aa).

3 disulfide bridges follow: Cys-7–Cys-43, Cys-23–Cys-39, and Cys-26–Cys-52. Ser-73 carries the post-translational modification Serine amide.

In terms of tissue distribution, produced by the medulla terminalis X-organ in the eyestalks and transported to the sinus gland where they are stored and released. Found also in the brain; in the neuroendocrine structures of the protocerebrum.

The protein resides in the secreted. Hormone found in the sinus gland of isopods and decapods which controls the blood sugar level. Has a secretagogue action over the amylase released from the midgut gland. May act as a stress hormone and may be involved in the control of molting and reproduction. This chain is Crustacean hyperglycemic hormone, found in Armadillidium vulgare (Pillbug).